A 109-amino-acid polypeptide reads, in one-letter code: Nucleoid-associated protein BCE_0021 (109 aa).

Belongs to the YbaB/EbfC family. Homodimer.

It localises to the cytoplasm. The protein resides in the nucleoid. In terms of biological role, binds to DNA and alters its conformation. May be involved in regulation of gene expression, nucleoid organization and DNA protection. This chain is Nucleoid-associated protein BCE_0021, found in Bacillus cereus (strain ATCC 10987 / NRS 248).